Reading from the N-terminus, the 629-residue chain is tRNA uridine 5-carboxymethylaminomethyl modification enzyme MnmG (629 aa).

Residues 13 to 18 (GGGHAG), Val-125, and Ser-180 each bind FAD. Position 273 to 287 (273 to 287 (GPRYCPSIEDKVMRF)) interacts with NAD(+). Residue Gln-370 participates in FAD binding.

Belongs to the MnmG family. In terms of assembly, homodimer. Heterotetramer of two MnmE and two MnmG subunits. It depends on FAD as a cofactor.

Its subcellular location is the cytoplasm. Functionally, NAD-binding protein involved in the addition of a carboxymethylaminomethyl (cmnm) group at the wobble position (U34) of certain tRNAs, forming tRNA-cmnm(5)s(2)U34. The sequence is that of tRNA uridine 5-carboxymethylaminomethyl modification enzyme MnmG from Shigella dysenteriae serotype 1 (strain Sd197).